A 297-amino-acid chain; its full sequence is Large ribosomal subunit protein uL18 (297 aa).

Gly2 bears the N-acetylglycine mark. Residues Lys5 and Lys48 each carry the N6-acetyllysine modification. A Phosphoserine modification is found at Ser185. Position 220 is an N6-acetyllysine; alternate (Lys220). Lys220 is covalently cross-linked (Glycyl lysine isopeptide (Lys-Gly) (interchain with G-Cter in SUMO1); alternate). A Glycyl lysine isopeptide (Lys-Gly) (interchain with G-Cter in SUMO2); alternate cross-link involves residue Lys220. Thr232 carries the post-translational modification Phosphothreonine. The tract at residues 253–297 (YEKKPKREVKKKRWNRPKMSLAQKKDRVAQKKASFLRAQERAAES) is disordered. The segment covering 258–268 (KREVKKKRWNR) has biased composition (basic residues). A Phosphoserine modification is found at Ser272.

The protein belongs to the universal ribosomal protein uL18 family. As to quaternary structure, component of the large ribosomal subunit (LSU). Part of the 5S RNP complex, which is a LSU subcomplex composed of the 5S RNA, RPL5 and RPL11. Component of a hexameric 5S RNP precursor complex, composed of 5S RNA, RRS1, RPF2/BXDC1, RPL5, RPL11 and HEATR3; this complex acts as a precursor for ribosome assembly. Interacts with isoform 1 of NVL in an ATP-dependent manner. Interacts with RRP1B. Interacts with IPO5, IPO7 and KPNB1; these interactions may be involved in RPL5 nuclear import for the assembly of ribosomal subunits.

It is found in the cytoplasm. The protein localises to the nucleus. The protein resides in the nucleolus. Its function is as follows. Component of the ribosome, a large ribonucleoprotein complex responsible for the synthesis of proteins in the cell. The small ribosomal subunit (SSU) binds messenger RNAs (mRNAs) and translates the encoded message by selecting cognate aminoacyl-transfer RNA (tRNA) molecules. The large subunit (LSU) contains the ribosomal catalytic site termed the peptidyl transferase center (PTC), which catalyzes the formation of peptide bonds, thereby polymerizing the amino acids delivered by tRNAs into a polypeptide chain. The nascent polypeptides leave the ribosome through a tunnel in the LSU and interact with protein factors that function in enzymatic processing, targeting, and the membrane insertion of nascent chains at the exit of the ribosomal tunnel. As part of the 5S RNP/5S ribonucleoprotein particle it is an essential component of the LSU, required for its formation and the maturation of rRNAs. It also couples ribosome biogenesis to p53/TP53 activation. As part of the 5S RNP it accumulates in the nucleoplasm and inhibits MDM2, when ribosome biogenesis is perturbed, mediating the stabilization and the activation of TP53. This Oryctolagus cuniculus (Rabbit) protein is Large ribosomal subunit protein uL18 (RPL5).